Here is a 189-residue protein sequence, read N- to C-terminus: UPF0494 membrane protein C977.06 (189 aa).

Transmembrane regions (helical) follow at residues 78-98 (WPLLIIWCILIVFAIDKNFEV), 120-140 (IWGPIAIYICLFVLLLLGLIY), and 148-168 (AIPLISIVIAAVVVIIAVAMV).

It belongs to the UPF0494 family.

The protein resides in the membrane. This Schizosaccharomyces pombe (strain 972 / ATCC 24843) (Fission yeast) protein is UPF0494 membrane protein C977.06.